A 288-amino-acid polypeptide reads, in one-letter code: Phosphatidylserine decarboxylase proenzyme (288 aa).

Active-site charge relay system; for autoendoproteolytic cleavage activity residues include aspartate 101, histidine 158, and serine 262. Serine 262 acts as the Schiff-base intermediate with substrate; via pyruvic acid; for decarboxylase activity in catalysis. Position 262 is a pyruvic acid (Ser); by autocatalysis (serine 262).

This sequence belongs to the phosphatidylserine decarboxylase family. PSD-B subfamily. Prokaryotic type I sub-subfamily. In terms of assembly, heterodimer of a large membrane-associated beta subunit and a small pyruvoyl-containing alpha subunit. Requires pyruvate as cofactor. Is synthesized initially as an inactive proenzyme. Formation of the active enzyme involves a self-maturation process in which the active site pyruvoyl group is generated from an internal serine residue via an autocatalytic post-translational modification. Two non-identical subunits are generated from the proenzyme in this reaction, and the pyruvate is formed at the N-terminus of the alpha chain, which is derived from the carboxyl end of the proenzyme. The autoendoproteolytic cleavage occurs by a canonical serine protease mechanism, in which the side chain hydroxyl group of the serine supplies its oxygen atom to form the C-terminus of the beta chain, while the remainder of the serine residue undergoes an oxidative deamination to produce ammonia and the pyruvoyl prosthetic group on the alpha chain. During this reaction, the Ser that is part of the protease active site of the proenzyme becomes the pyruvoyl prosthetic group, which constitutes an essential element of the active site of the mature decarboxylase.

It is found in the cell membrane. The catalysed reaction is a 1,2-diacyl-sn-glycero-3-phospho-L-serine + H(+) = a 1,2-diacyl-sn-glycero-3-phosphoethanolamine + CO2. It functions in the pathway phospholipid metabolism; phosphatidylethanolamine biosynthesis; phosphatidylethanolamine from CDP-diacylglycerol: step 2/2. Functionally, catalyzes the formation of phosphatidylethanolamine (PtdEtn) from phosphatidylserine (PtdSer). The polypeptide is Phosphatidylserine decarboxylase proenzyme (Alkalilimnicola ehrlichii (strain ATCC BAA-1101 / DSM 17681 / MLHE-1)).